Consider the following 1241-residue polypeptide: Interphotoreceptor matrix proteoglycan 2 (1241 aa).

Positions Met1–Ser28 are cleaved as a signal peptide. At Glu29–Val1104 the chain is on the extracellular side. A glycan (O-linked (GalNAc...) threonine) is linked at Thr193. The tract at residues Ala206 to Ala234 is disordered. Residues Ser211–Gln229 are compositionally biased toward polar residues. Asn225 carries an N-linked (GlcNAc...) asparagine glycan. O-linked (GalNAc...) threonine glycosylation is present at Thr231. The SEA 1 domain maps to Ala235–Asn349. Residues Arg255–Arg263 form a hyaluronan-binding motif involved in chondroitin sulfate A-binding region. 3 N-linked (GlcNAc...) asparagine glycosylation sites follow: Asn297, Asn316, and Asn366. Residues Thr429, Thr430, and Thr431 are each glycosylated (O-linked (GalNAc...) threonine). Residues Thr431–Ser443 show a composition bias toward low complexity. Disordered stretches follow at residues Thr431–Gly456 and Val500–Ser520. O-linked (GalNAc...) threonine glycosylation occurs at Thr817. 3 N-linked (GlcNAc...) asparagine glycosylation sites follow: Asn841, Asn945, and Asn959. The 114-residue stretch at Gly900–Asp1013 folds into the SEA 2 domain. EGF-like domains are found at residues Asp1013 to Gln1054 and Ser1055 to Glu1096. 6 disulfide bridges follow: Cys1017–Cys1028, Cys1022–Cys1039, Cys1041–Cys1053, Cys1057–Cys1070, Cys1064–Cys1080, and Cys1082–Cys1095. The tract at residues Arg1083 to Arg1091 is hyaluronan-binding motif involved in chondroitin sulfate C-binding. Residues Ile1105–Phe1125 form a helical membrane-spanning segment. The Cytoplasmic portion of the chain corresponds to Leu1126–Leu1241. The tract at residues Lys1128 to Arg1136 is hyaluronan-binding motif involved in chondroitin sulfate A- and C-binding. The segment at Arg1139–Arg1145 is hyaluronan-binding motif involved in chondroitin sulfate C-binding. The segment at Lys1210–Arg1218 is hyaluronan-binding motif involved in chondroitin sulfate A- and C-binding motif.

As to expression, expressed in the pineal gland and the outer layer of the retina.

Its subcellular location is the photoreceptor outer segment membrane. It localises to the photoreceptor inner segment membrane. The protein localises to the secreted. The protein resides in the extracellular space. It is found in the extracellular matrix. Its subcellular location is the interphotoreceptor matrix. In terms of biological role, chondroitin sulfate- and hyaluronan-binding proteoglycan involved in the organization of interphotoreceptor matrix; may participate in the maturation and maintenance of the light-sensitive photoreceptor outer segment. Binds heparin. The polypeptide is Interphotoreceptor matrix proteoglycan 2 (Impg2) (Rattus norvegicus (Rat)).